The chain runs to 428 residues: Immunoglobulin superfamily containing leucine-rich repeat protein (428 aa).

Residues 1-18 (MRALCLLCWAVLLNLVRA) form the signal peptide. Positions 19 to 50 (CPEPCDCGEKYGFQIADCAYRDLEGVPPGFPA) constitute an LRRNT domain. An N-linked (GlcNAc...) asparagine glycan is attached at N51. LRR repeat units lie at residues 51 to 72 (NVTTLSLSANRLPGLPEGAFRE), 75 to 98 (LLQSLWLAHNEIRSVAIGALAPLS), 99 to 122 (HLKSLDLSHNLLSEFAWSDLHNLS), 123 to 144 (ALQLLKMDSNELAFIPRDAFSS), and 147 to 168 (ALRSLQLNHNRLHALAEGTFAP). One can recognise an LRRCT domain in the interval 180–231 (NPFDCTCGIVWFKTWALASAVSIPEQDNIACTTPHVLKGIPLGRLPPLPCSA). The Ig-like domain occupies 232–343 (PSVQLSYQPS…GSAESSVNVA (112 aa)). C257 and C327 are joined by a disulfide. The N-linked (GlcNAc...) asparagine glycan is linked to N309.

As to expression, detected in thyroid, heart, retina and spinal cord.

It is found in the secreted. This is Immunoglobulin superfamily containing leucine-rich repeat protein (Islr) from Mus musculus (Mouse).